The following is a 505-amino-acid chain: Glutamyl-tRNA(Gln) amidotransferase subunit A (505 aa).

Catalysis depends on charge relay system residues K80 and S155. S179 functions as the Acyl-ester intermediate in the catalytic mechanism.

Belongs to the amidase family. GatA subfamily. Heterotrimer of A, B and C subunits.

The catalysed reaction is L-glutamyl-tRNA(Gln) + L-glutamine + ATP + H2O = L-glutaminyl-tRNA(Gln) + L-glutamate + ADP + phosphate + H(+). Its function is as follows. Allows the formation of correctly charged Gln-tRNA(Gln) through the transamidation of misacylated Glu-tRNA(Gln) in organisms which lack glutaminyl-tRNA synthetase. The reaction takes place in the presence of glutamine and ATP through an activated gamma-phospho-Glu-tRNA(Gln). In Acidothermus cellulolyticus (strain ATCC 43068 / DSM 8971 / 11B), this protein is Glutamyl-tRNA(Gln) amidotransferase subunit A.